The sequence spans 107 residues: Benzene 1,2-dioxygenase system ferredoxin subunit (107 aa).

The 96-residue stretch at 4–99 (TYILRQSDLP…IKVEGDEVHV (96 aa)) folds into the Rieske domain. The [2Fe-2S] cluster site is built by Cys-43, His-45, Cys-62, and His-65.

This sequence belongs to the bacterial ring-hydroxylating dioxygenase ferredoxin component family. This dioxygenase system consists of four proteins: the two subunits of the hydroxylase component (BnzA and BnzB), a ferredoxin (BnzC) and a ferredoxin reductase (BnzD).

It functions in the pathway aromatic compound metabolism; benzene degradation; catechol from benzene: step 1/2. Functionally, this protein seems to be a 2Fe-2S ferredoxin. The polypeptide is Benzene 1,2-dioxygenase system ferredoxin subunit (bnzC) (Pseudomonas putida (Arthrobacter siderocapsulatus)).